We begin with the raw amino-acid sequence, 190 residues long: Peptidyl-tRNA hydrolase (190 aa).

Tyr-14 contacts tRNA. His-19 acts as the Proton acceptor in catalysis. The tRNA site is built by Tyr-64 and Asn-66.

The protein belongs to the PTH family. Monomer.

It is found in the cytoplasm. The catalysed reaction is an N-acyl-L-alpha-aminoacyl-tRNA + H2O = an N-acyl-L-amino acid + a tRNA + H(+). Its function is as follows. Hydrolyzes ribosome-free peptidyl-tRNAs (with 1 or more amino acids incorporated), which drop off the ribosome during protein synthesis, or as a result of ribosome stalling. Catalyzes the release of premature peptidyl moieties from peptidyl-tRNA molecules trapped in stalled 50S ribosomal subunits, and thus maintains levels of free tRNAs and 50S ribosomes. This Rhodopirellula baltica (strain DSM 10527 / NCIMB 13988 / SH1) protein is Peptidyl-tRNA hydrolase.